We begin with the raw amino-acid sequence, 994 residues long: MAELEKLAAARLEKEASNNTVNPVREVSEDDVKDVSGETTVVTTSISEGANESLSKKEDEPALIGSNVPEELEGNSLEVQSAITTDLEKVSSTPTPSNAEKESPEATEVRIVEEGKLEKADPSVVNEELSKEILEDPEVVPSPAKMYTALKAVDGDMPVLKSENGNDGDTDANTADEDNENDEDDVDEDEDEDDADMDTAKALAELAMTAGKSGNPAFSGTKPSMGAAGPSLPSLPQRPAVRKPIAATASDSPGRNTQRPNGALSTQITSTTDESASSDAAEGDETREKLQNIRVKFLRLAHRLGQSPQNVVVAQVLYRLGLAESLRGGSAPNRSGAFSFDRANALAEEQEAANQEEELDFACTILVLGKTGVGKSSTINSIFDERKSVTSAFKPSTNKVQEVIGTVHGIKVRVIDTPGLLPSVADQQHNERIMGQVKKYIKKASPDIVLYFDRLDMQSRDFGDLPLLRTITDLFGAAVWFNAIVVLTHASSAPPDGPNGVPLSYEMFVAQRSHVVQQTIRQAAGDMRLMNPVSLVENHPACRTNRTGQRVLPNGQIWKPQLLLLCFASKILAEANSLLKLQETTAPGRPFGQRSRVPPLPFLLSSLLQSRAQLKLPDEQAGESDESDDDEEEEDSDADDYDELPPFRPLSKEELEDLTKEQREDYMEELADRERMFQKKQYREEIRRRKEAKKRQAQMSKEELAEAEEAEDEAGNAAAVPVPMPDMALPPSFDSDNPTHRYRYLETANQWLVRPVLETHGWDHDAGYDGFNVEKMFVVKEKIPASVSGQVTKDKKEAQVNFEAAASLRHGEGKVTLTGFDVQTIGKDLAYTVRAETRFNNFKRNKTTAGVTATYLNDTIAAGVKLEDRVLIGKRVKLVVNGGVLTGKGDKAYGGSLEATLRGKEYPLSRTLSTLGLSVMDWHGDLAIGGNLQSQFMVGKTMMVGRANLNNRGSGQVSIRASSSEQLQMVLIGIVPILRSLINCRFGFGGQSQQ.

3 disordered regions span residues 14–61 (KEAS…EDEP), 84–124 (TTDL…DPSV), and 152–287 (AVDG…DETR). Composition is skewed to polar residues over residues 37-53 (GETTVVTTSISEGANES) and 84-98 (TTDLEKVSSTPTPSN). The segment covering 99–121 (AEKESPEATEVRIVEEGKLEKAD) has biased composition (basic and acidic residues). Over residues 166-197 (NDGDTDANTADEDNENDEDDVDEDEDEDDADM) the composition is skewed to acidic residues. Residues 249–268 (ASDSPGRNTQRPNGALSTQI) are compositionally biased toward polar residues. The segment covering 269–280 (TSTTDESASSDA) has biased composition (low complexity). Residues 360–589 (DFACTILVLG…KLQETTAPGR (230 aa)) enclose the AIG1-type G domain. The G1 stretch occupies residues 369-376 (GKTGVGKS). 372 to 377 (GVGKSS) lines the GTP pocket. Ser-376 is a binding site for Mg(2+). Positions 395 to 399 (PSTNK) are G2. Residues 416–419 (DTPG) are G3. The interval 488–491 (THAS) is G4. GTP contacts are provided by residues His-489 and 537–538 (EN). The interval 537-539 (ENH) is G5. Disordered regions lie at residues 616–659 (LPDE…EDLT) and 691–716 (EAKKRQAQMSKEELAEAEEAEDEAGN). Residues 620-643 (QAGESDESDDDEEEEDSDADDYDE) show a composition bias toward acidic residues. Residues 650-659 (LSKEELEDLT) are compositionally biased toward basic and acidic residues. Over residues 705 to 714 (AEAEEAEDEA) the composition is skewed to acidic residues. Residues 969–989 (MVLIGIVPILRSLINCRFGFG) traverse the membrane as a helical segment.

Belongs to the TRAFAC class TrmE-Era-EngA-EngB-Septin-like GTPase superfamily. AIG1/Toc34/Toc159-like paraseptin GTPase family. TOC159 subfamily. In terms of assembly, part of the TOC core complex. Requires Mg(2+) as cofactor.

It localises to the plastid. The protein localises to the chloroplast outer membrane. In terms of biological role, GTPase involved in protein precursor import into chloroplasts. Seems to recognize chloroplast-destined precursor proteins and regulate their presentation to the translocation channel through GTP hydrolysis. Probably specialized in the import of nuclear encoded non-photosynthetic preproteins from the cytoplasm to the chloroplast. The sequence is that of Translocase of chloroplast 108, chloroplastic from Physcomitrium patens (Spreading-leaved earth moss).